The following is a 345-amino-acid chain: Anthranilate phosphoribosyltransferase (345 aa).

5-phospho-alpha-D-ribose 1-diphosphate contacts are provided by residues glycine 87, 90–91 (GD), threonine 95, 97–100 (NAST), 115–123 (KHGNRSFSS), and serine 127. An anthranilate-binding site is contributed by glycine 87. Residue serine 99 participates in Mg(2+) binding. An anthranilate-binding site is contributed by asparagine 118. Arginine 173 contacts anthranilate. Mg(2+)-binding residues include aspartate 232 and glutamate 233.

Belongs to the anthranilate phosphoribosyltransferase family. As to quaternary structure, homodimer. It depends on Mg(2+) as a cofactor.

It catalyses the reaction N-(5-phospho-beta-D-ribosyl)anthranilate + diphosphate = 5-phospho-alpha-D-ribose 1-diphosphate + anthranilate. The protein operates within amino-acid biosynthesis; L-tryptophan biosynthesis; L-tryptophan from chorismate: step 2/5. Catalyzes the transfer of the phosphoribosyl group of 5-phosphorylribose-1-pyrophosphate (PRPP) to anthranilate to yield N-(5'-phosphoribosyl)-anthranilate (PRA). The chain is Anthranilate phosphoribosyltransferase from Aeropyrum pernix (strain ATCC 700893 / DSM 11879 / JCM 9820 / NBRC 100138 / K1).